A 470-amino-acid chain; its full sequence is Beta-Ala-Xaa dipeptidase (470 aa).

His-87 contacts Zn(2+). The active site involves Asp-89. Asp-119 is a Zn(2+) binding site. Glu-153 acts as the Proton acceptor in catalysis. Positions 154 and 177 each coordinate Zn(2+). Arg-350 provides a ligand contact to substrate. Position 439 (His-439) interacts with Zn(2+).

The protein belongs to the peptidase M20A family. The cofactor is Zn(2+).

The protein resides in the cytoplasm. Fully inhibited by 1,10-phenanthroline or EDTA. Its function is as follows. Is a relatively unspecific dipeptidase cleaving a variety of dipeptides, notably those with an N-terminal beta-Ala or D-Ala residue, e.g. carnosine (beta-Ala-His). To a lesser extent, also shows aminopeptidase activity, since it is able to catalyze the removal of the N-terminal amino acid from a few distinct tripeptides. The protein is Beta-Ala-Xaa dipeptidase (pepV) of Lactobacillus delbrueckii subsp. lactis.